The sequence spans 444 residues: Aspartate--tRNA(Asp/Asn) ligase (444 aa).

Position 176 (Glu176) interacts with L-aspartate. The tract at residues 198 to 201 is aspartate; the sequence is QLFK. Position 220 (Arg220) interacts with L-aspartate. Residues 220–222, 228–230, and Glu367 contribute to the ATP site; these read RAE and RHL. Glu367 and Ser370 together coordinate Mg(2+). L-aspartate contacts are provided by Ser370 and Arg374. 415–418 is a binding site for ATP; that stretch reads GCER.

It belongs to the class-II aminoacyl-tRNA synthetase family. Type 2 subfamily. In terms of assembly, homodimer. Mg(2+) serves as cofactor.

The protein localises to the cytoplasm. The catalysed reaction is tRNA(Asx) + L-aspartate + ATP = L-aspartyl-tRNA(Asx) + AMP + diphosphate. Its function is as follows. Aspartyl-tRNA synthetase with relaxed tRNA specificity since it is able to aspartylate not only its cognate tRNA(Asp) but also tRNA(Asn). Reaction proceeds in two steps: L-aspartate is first activated by ATP to form Asp-AMP and then transferred to the acceptor end of tRNA(Asp/Asn). The chain is Aspartate--tRNA(Asp/Asn) ligase from Methanosarcina acetivorans (strain ATCC 35395 / DSM 2834 / JCM 12185 / C2A).